A 332-amino-acid polypeptide reads, in one-letter code: Malate dehydrogenase 1, cytoplasmic (332 aa).

Residues 16–17 (QI) and aspartate 43 each bind NAD(+). At methionine 56 the chain carries Methionine sulfoxide. Residue glycine 90 coordinates NAD(+). A Methionine sulfoxide modification is found at methionine 97. Residue arginine 99 coordinates oxaloacetate. Glutamine 113 contributes to the NAD(+) binding site. Lysine 119 participates in a covalent cross-link: Glycyl lysine isopeptide (Lys-Gly) (interchain with G-Cter in ubiquitin). Asparagine 132 provides a ligand contact to NAD(+). 4 residues coordinate oxaloacetate: asparagine 132, arginine 163, histidine 188, and serine 243. Histidine 188 acts as the Proton acceptor in catalysis.

It belongs to the LDH/MDH superfamily. MDH type 2 family. As to quaternary structure, forms a homodimer. Forms a disulfide-linked homodimer upon oxidation. Interacts with 14-3-3-like proteins GRF1 GRF3 and GRF8. Interacts with TRX1, TRX2, TRX3, TRX4 and TRX5. In terms of tissue distribution, expressed in rosette leaves.

The protein resides in the cytoplasm. It catalyses the reaction (S)-malate + NAD(+) = oxaloacetate + NADH + H(+). Decreased activity upon treatment with hydrogen peroxide. Functionally, catalyzes a reversible NAD-dependent dehydrogenase reaction involved in central metabolism and redox homeostasis between organellar compartments. This Arabidopsis thaliana (Mouse-ear cress) protein is Malate dehydrogenase 1, cytoplasmic (MDH1).